The sequence spans 382 residues: S-adenosylmethionine synthase (382 aa).

An ATP-binding site is contributed by H16. Position 18 (D18) interacts with Mg(2+). E44 provides a ligand contact to K(+). Residues E57 and Q100 each contribute to the L-methionine site. The flexible loop stretch occupies residues 100 to 110; it reads QSPDIAQGVDN. Residues 165-167, 231-232, D240, 246-247, and K267 each bind ATP; these read DAK, RF, and RK. Residue D240 participates in L-methionine binding. K271 lines the L-methionine pocket.

The protein belongs to the AdoMet synthase family. In terms of assembly, homotetramer; dimer of dimers. It depends on Mg(2+) as a cofactor. K(+) is required as a cofactor.

It is found in the cytoplasm. It carries out the reaction L-methionine + ATP + H2O = S-adenosyl-L-methionine + phosphate + diphosphate. It participates in amino-acid biosynthesis; S-adenosyl-L-methionine biosynthesis; S-adenosyl-L-methionine from L-methionine: step 1/1. Its function is as follows. Catalyzes the formation of S-adenosylmethionine (AdoMet) from methionine and ATP. The overall synthetic reaction is composed of two sequential steps, AdoMet formation and the subsequent tripolyphosphate hydrolysis which occurs prior to release of AdoMet from the enzyme. This chain is S-adenosylmethionine synthase, found in Legionella pneumophila (strain Paris).